A 126-amino-acid polypeptide reads, in one-letter code: Large ribosomal subunit protein bL12 (126 aa).

Belongs to the bacterial ribosomal protein bL12 family. Homodimer. Part of the ribosomal stalk of the 50S ribosomal subunit. Forms a multimeric L10(L12)X complex, where L10 forms an elongated spine to which 2 to 4 L12 dimers bind in a sequential fashion. Binds GTP-bound translation factors.

Its function is as follows. Forms part of the ribosomal stalk which helps the ribosome interact with GTP-bound translation factors. Is thus essential for accurate translation. The sequence is that of Large ribosomal subunit protein bL12 from Geotalea daltonii (strain DSM 22248 / JCM 15807 / FRC-32) (Geobacter daltonii).